Here is a 432-residue protein sequence, read N- to C-terminus: Protein trichome birefringence-like 23 (432 aa).

The chain crosses the membrane as a helical; Signal-anchor for type II membrane protein span at residues 13–35; it reads QNTYLIKLVAATLITCLAFRFFV. Positions 153–155 match the GDS motif motif; it reads GDS. A DCXHWCLPGXXDXWN motif motif is present at residues 404–418; sequence DCLHWCLPGPIDHLN.

Belongs to the PC-esterase family. TBL subfamily.

The protein resides in the membrane. Its function is as follows. May act as a bridging protein that binds pectin and other cell wall polysaccharides. Probably involved in maintaining esterification of pectins. May be involved in the specific O-acetylation of cell wall polymers. The chain is Protein trichome birefringence-like 23 (TBL23) from Arabidopsis thaliana (Mouse-ear cress).